Consider the following 229-residue polypeptide: Transcriptional regulatory protein CreB (229 aa).

Residues 5 to 119 (TVWLVEDEQG…EVCARVRTLL (115 aa)) enclose the Response regulatory domain. Position 54 is a 4-aspartylphosphate (D54). Residues 129–228 (SPVIRIGHFE…HRGMGYSLRG (100 aa)) constitute a DNA-binding region (ompR/PhoB-type).

Phosphorylated by CreC.

It is found in the cytoplasm. Its function is as follows. Member of the two-component regulatory system CreC/CreB involved in catabolic regulation. This Escherichia coli (strain K12) protein is Transcriptional regulatory protein CreB (creB).